Here is a 244-residue protein sequence, read N- to C-terminus: Phosphoadenosine 5'-phosphosulfate reductase (244 aa).

The active-site Nucleophile; cysteine thiosulfonate intermediate is Cys-239.

Belongs to the PAPS reductase family. CysH subfamily.

It localises to the cytoplasm. The enzyme catalyses [thioredoxin]-disulfide + sulfite + adenosine 3',5'-bisphosphate + 2 H(+) = [thioredoxin]-dithiol + 3'-phosphoadenylyl sulfate. Its pathway is sulfur metabolism; hydrogen sulfide biosynthesis; sulfite from sulfate: step 3/3. Functionally, catalyzes the formation of sulfite from phosphoadenosine 5'-phosphosulfate (PAPS) using thioredoxin as an electron donor. This is Phosphoadenosine 5'-phosphosulfate reductase from Photorhabdus laumondii subsp. laumondii (strain DSM 15139 / CIP 105565 / TT01) (Photorhabdus luminescens subsp. laumondii).